The chain runs to 431 residues: Levansucrase Lscbeta (431 aa).

Sucrose-binding residues include tryptophan 61, aspartate 62, alanine 148, arginine 218, and aspartate 219. The Nucleophile role is filled by aspartate 62. Glutamate 303 serves as the catalytic Proton donor/acceptor.

Belongs to the glycosyl hydrolase 68 family. As to quaternary structure, homodimer.

The catalysed reaction is [6)-beta-D-fructofuranosyl-(2-&gt;](n) alpha-D-glucopyranoside + sucrose = [6)-beta-D-fructofuranosyl-(2-&gt;](n+1) alpha-D-glucopyranoside + D-glucose. Its activity is regulated as follows. Sucrose hydrolase activity is negatively affected by salt concentration. The levan polymerization rate is constant regardless of sucrose concentration. Functionally, catalyzes the synthesis of levan, a fructose polymer, by transferring the fructosyl moiety from sucrose to a growing acceptor molecule. Also displays sucrose hydrolase activity. This is Levansucrase Lscbeta from Pseudomonas syringae pv. actinidiae.